A 131-amino-acid chain; its full sequence is Peptide methionine sulfoxide reductase MsrB (131 aa).

Residues 8-130 (LDTWREELTD…NSLSLKLVPR (123 aa)) enclose the MsrB domain. Cys47, Cys50, Cys96, and Cys99 together coordinate Zn(2+). Residue Cys119 is the Nucleophile of the active site.

Belongs to the MsrB Met sulfoxide reductase family. It depends on Zn(2+) as a cofactor.

It carries out the reaction L-methionyl-[protein] + [thioredoxin]-disulfide + H2O = L-methionyl-(R)-S-oxide-[protein] + [thioredoxin]-dithiol. The sequence is that of Peptide methionine sulfoxide reductase MsrB from Ectopseudomonas mendocina (strain ymp) (Pseudomonas mendocina).